The sequence spans 461 residues: RCC1-like G exchanging factor-like protein (461 aa).

Residues M1–G10 are compositionally biased toward low complexity. Residues M1 to E34 constitute a mitochondrion transit peptide. Positions M1 to A35 are disordered. 7 RCC1 repeats span residues A55–K121, V125–D188, E190–D244, K245–A297, D298–A350, G352–N408, and K409–K458.

Forms a regulatory protein-RNA complex, consisting of RCC1L, NGRN, RPUSD3, RPUSD4, TRUB2, FASTKD2 and 16S mt-rRNA. Interacts with 16S mt-rRNA; this interaction is direct. Interacts with OPA1; this interaction is direct. In terms of tissue distribution, at E8.5, broadly expressed in yolk sac placenta, decidua, and embryo, with highest levels found in the trophoblast giant cells (TGCs) and ectoplacental cone (at protein level).

The protein localises to the mitochondrion inner membrane. Its function is as follows. Guanine nucleotide exchange factor (GEF) for mitochondrial dynamin-related GTPase OPA1. Activates OPA1, by exchanging bound GDP for free GTP, and drives OPA1 and MFN1-dependent mitochondrial fusion. Plays an essential role in mitochondrial ribosome biogenesis. As a component of a functional protein-RNA module, consisting of RCC1L, NGRN, RPUSD3, RPUSD4, TRUB2, FASTKD2 and 16S mitochondrial ribosomal RNA (16S mt-rRNA), controls 16S mt-rRNA abundance and is required for intra-mitochondrial translation of core subunits of the oxidative phosphorylation system. The protein is RCC1-like G exchanging factor-like protein of Mus musculus (Mouse).